We begin with the raw amino-acid sequence, 139 residues long: Nucleoside diphosphate kinase (139 aa).

6 residues coordinate ATP: lysine 11, phenylalanine 59, arginine 87, threonine 93, arginine 104, and asparagine 114. The active-site Pros-phosphohistidine intermediate is histidine 117.

It belongs to the NDK family. Homotetramer. Mg(2+) is required as a cofactor.

Its subcellular location is the cytoplasm. It catalyses the reaction a 2'-deoxyribonucleoside 5'-diphosphate + ATP = a 2'-deoxyribonucleoside 5'-triphosphate + ADP. The enzyme catalyses a ribonucleoside 5'-diphosphate + ATP = a ribonucleoside 5'-triphosphate + ADP. In terms of biological role, major role in the synthesis of nucleoside triphosphates other than ATP. The ATP gamma phosphate is transferred to the NDP beta phosphate via a ping-pong mechanism, using a phosphorylated active-site intermediate. The polypeptide is Nucleoside diphosphate kinase (Flavobacterium psychrophilum (strain ATCC 49511 / DSM 21280 / CIP 103535 / JIP02/86)).